A 473-amino-acid chain; its full sequence is Ribulose bisphosphate carboxylase large chain 1 (473 aa).

Residues N116 and T166 each coordinate substrate. The Proton acceptor role is filled by K168. K170 contributes to the substrate binding site. 3 residues coordinate Mg(2+): K194, D196, and E197. K194 carries the post-translational modification N6-carboxylysine. Residue H287 is the Proton acceptor of the active site. Substrate-binding residues include R288, H320, and S372.

It belongs to the RuBisCO large chain family. Type I subfamily. As to quaternary structure, heterohexadecamer of 8 large chains and 8 small chains. Mg(2+) is required as a cofactor.

It catalyses the reaction 2 (2R)-3-phosphoglycerate + 2 H(+) = D-ribulose 1,5-bisphosphate + CO2 + H2O. The enzyme catalyses D-ribulose 1,5-bisphosphate + O2 = 2-phosphoglycolate + (2R)-3-phosphoglycerate + 2 H(+). In terms of biological role, ruBisCO catalyzes two reactions: the carboxylation of D-ribulose 1,5-bisphosphate, the primary event in carbon dioxide fixation, as well as the oxidative fragmentation of the pentose substrate. Both reactions occur simultaneously and in competition at the same active site. The polypeptide is Ribulose bisphosphate carboxylase large chain 1 (Acidithiobacillus ferrooxidans (strain ATCC 23270 / DSM 14882 / CIP 104768 / NCIMB 8455) (Ferrobacillus ferrooxidans (strain ATCC 23270))).